The following is a 692-amino-acid chain: Transforming growth factor beta activator LRRC33 (692 aa).

A signal peptide spans 1–24 (MEFLPLWLCLGFHFLIVEWRSGRG). Residues 25–650 (TATAASQGGC…CKWGQVDTGL (626 aa)) are Extracellular-facing. The LRRNT domain maps to 29-56 (ASQGGCKVVDRVADCRSLNLASVPSGLP). LRR repeat units follow at residues 58–79 (HSRMLVLDANPLRVLWNHSLQA), 82–103 (RLEDLSLHSCHLDRISHWAFHE), 106–127 (HLQNLVLADNRLSENYKESATA), 133–155 (RLRRLDLSGNSLTEDMAALMLQN), 158–179 (SLEVVSLARNTLMRLDDSVFEG), 182–203 (RLVELDLQRNYIFEIEGGAFDG), 206–227 (ELRRLNLAYNNLPCIVDFSLTQ), 228–239 (LRFLNVSYNILE), 251–272 (ELEILDLSHNQLLFFPLLPQCG), and 273–294 (KLHTLLLQDNSMGFYRELYNTS). Asn-74 carries an N-linked (GlcNAc...) asparagine glycan. N-linked (GlcNAc...) asparagine glycosylation occurs at Asn-155. Asn-232 carries an N-linked (GlcNAc...) asparagine glycan. Residues Asn-292, Asn-309, and Asn-312 are each glycosylated (N-linked (GlcNAc...) asparagine). LRR repeat units follow at residues 329-350 (ALRFLDMSQNQLRHLPDGFLKK), 353-374 (SLSHLNLNQNCLTKLHIREHEP), 377-398 (ALTELDLSRNQLAELHLAPGLT), 403-424 (NLRVFNLSSNQLLGVPTGLFHS), 427-448 (SITTLDMSHNQISLCPQTVPLD), 463-484 (SLRSLSLDGCGLKALQDCPFQG), 486-507 (SLTHLDLSSNWGILNGSVSPLS), 512-533 (TLQVLSLRNVGLGSGAAEMDFS), 537-558 (NLRELDLSGNSLTSFPKFKGSS), 559-580 (ALQTLDLRRNSLTALPQRVVSE), and 585-605 (GLQTIYLSQNPYDCCGVEGWG). The N-linked (GlcNAc...) asparagine glycan is linked to Asn-408. Asn-500 carries N-linked (GlcNAc...) asparagine glycosylation. The region spanning 606-643 (ALQHFKTIADLSMVTCNLSSKIIRVVELPEGIPQDCKW) is the LRRCT domain. Asn-622 carries an N-linked (GlcNAc...) asparagine glycan. A helical transmembrane segment spans residues 651–671 (FYLVLILPSCLTLLVASTVIF). The Cytoplasmic segment spans residues 672-692 (LTFKKPLLQVIKSRCHWSSIY).

This sequence belongs to the LRRC32/LRRC33 family. In terms of assembly, interacts (via LRR repeats) with TLR2, TLR3, TLR4, TLR9 and probably other Toll-like receptors. Interacts with CYBB/NOX2; the interaction is direct. Interacts with TGFB1; associates via disulfide bonds with the Latency-associated peptide chain (LAP) regulatory chain of TGFB1, leading to regulate activation of TGF-beta-1.

Its subcellular location is the cell membrane. It localises to the endoplasmic reticulum membrane. Its function is as follows. Key regulator of transforming growth factor beta-1 (TGFB1) specifically required for microglia function in the nervous system. Required for activation of latent TGF-beta-1 in macrophages and microglia: associates specifically via disulfide bonds with the Latency-associated peptide (LAP), which is the regulatory chain of TGFB1, and regulates integrin-dependent activation of TGF-beta-1. TGF-beta-1 activation mediated by LRRC33/NRROS is highly localized: there is little spreading of TGF-beta-1 activated from one microglial cell to neighboring microglia, suggesting the existence of localized and selective activation of TGF-beta-1 by LRRC33/NRROS. Indirectly plays a role in Toll-like receptor (TLR) signaling: ability to inhibit TLR-mediated NF-kappa-B activation and cytokine production is probably a consequence of its role in TGF-beta-1 signaling. The polypeptide is Transforming growth factor beta activator LRRC33 (Rattus norvegicus (Rat)).